The primary structure comprises 197 residues: MSSKEQKTPEGQAPEEIIMDQHEEIEAVEPEASAEQVDPRDEKIANLEAQLAEAQTRERDGILRVKAEMENLRRRTELDIEKAHKFALEKFINELLPVIDSLDRALEVADKANPDMSAMVEGIELTLKSMLDVVRKFGVEVIAETNVPLDPNVHQAIAMVESDDVAPGNVLGIMQKGYTLNGRTIRAAMVTVAKAKA.

The interval 1 to 39 is disordered; the sequence is MSSKEQKTPEGQAPEEIIMDQHEEIEAVEPEASAEQVDP.

The protein belongs to the GrpE family. As to quaternary structure, homodimer.

It is found in the cytoplasm. Its function is as follows. Participates actively in the response to hyperosmotic and heat shock by preventing the aggregation of stress-denatured proteins, in association with DnaK and GrpE. It is the nucleotide exchange factor for DnaK and may function as a thermosensor. Unfolded proteins bind initially to DnaJ; upon interaction with the DnaJ-bound protein, DnaK hydrolyzes its bound ATP, resulting in the formation of a stable complex. GrpE releases ADP from DnaK; ATP binding to DnaK triggers the release of the substrate protein, thus completing the reaction cycle. Several rounds of ATP-dependent interactions between DnaJ, DnaK and GrpE are required for fully efficient folding. The polypeptide is Protein GrpE (Escherichia coli O127:H6 (strain E2348/69 / EPEC)).